The following is a 292-amino-acid chain: Ribosomal protein L11 methyltransferase (292 aa).

Positions 143, 164, 186, and 227 each coordinate S-adenosyl-L-methionine.

The protein belongs to the methyltransferase superfamily. PrmA family.

It localises to the cytoplasm. It catalyses the reaction L-lysyl-[protein] + 3 S-adenosyl-L-methionine = N(6),N(6),N(6)-trimethyl-L-lysyl-[protein] + 3 S-adenosyl-L-homocysteine + 3 H(+). Functionally, methylates ribosomal protein L11. The polypeptide is Ribosomal protein L11 methyltransferase (Hahella chejuensis (strain KCTC 2396)).